A 207-amino-acid chain; its full sequence is High frequency lysogenization protein HflD homolog (207 aa).

The protein belongs to the HflD family.

It is found in the cytoplasm. Its subcellular location is the cell inner membrane. In Teredinibacter turnerae (strain ATCC 39867 / T7901), this protein is High frequency lysogenization protein HflD homolog.